A 451-amino-acid chain; its full sequence is UPF0210 protein CLL_A1718 (451 aa).

It belongs to the UPF0210 family. Homodimer.

This is UPF0210 protein CLL_A1718 from Clostridium botulinum (strain Eklund 17B / Type B).